Here is an 89-residue protein sequence, read N- to C-terminus: Small ribosomal subunit protein uS15 (89 aa).

It belongs to the universal ribosomal protein uS15 family. Part of the 30S ribosomal subunit. Forms a bridge to the 50S subunit in the 70S ribosome, contacting the 23S rRNA.

Functionally, one of the primary rRNA binding proteins, it binds directly to 16S rRNA where it helps nucleate assembly of the platform of the 30S subunit by binding and bridging several RNA helices of the 16S rRNA. Its function is as follows. Forms an intersubunit bridge (bridge B4) with the 23S rRNA of the 50S subunit in the ribosome. The protein is Small ribosomal subunit protein uS15 of Bacteroides fragilis (strain ATCC 25285 / DSM 2151 / CCUG 4856 / JCM 11019 / LMG 10263 / NCTC 9343 / Onslow / VPI 2553 / EN-2).